A 206-amino-acid chain; its full sequence is A-type ATP synthase subunit D (206 aa).

It belongs to the V-ATPase D subunit family. Has multiple subunits with at least A(3), B(3), C, D, E, F, H, I and proteolipid K(x).

The protein localises to the cell membrane. Component of the A-type ATP synthase that produces ATP from ADP in the presence of a proton gradient across the membrane. The polypeptide is A-type ATP synthase subunit D (Methanococcoides burtonii (strain DSM 6242 / NBRC 107633 / OCM 468 / ACE-M)).